The chain runs to 153 residues: Protein SREK1IP1 (153 aa).

The segment at 13–30 adopts a CCHC-type zinc-finger fold; it reads AGCRKCGYPGHLTFECRN. Positions 44–153 are disordered; the sequence is VSSTSSEDSD…SPNRSEVTKK (110 aa). The residue at position 52 (Ser52) is a Phosphoserine. Positions 66-84 are enriched in basic and acidic residues; it reads QEKRINEEEEKKKEKSREK. The segment covering 85–94 has biased composition (basic residues); sequence IKLKKKRKRS. A phosphoserine mark is found at Ser96 and Ser97. Residues 106–141 show a composition bias toward basic residues; sequence QKKQKYQKKEKKKEKKNKSKKGKHHKKEKKKRKKEK.

Interacts with SREK1/SFRS12.

In terms of biological role, possible splicing regulator involved in the control of cellular survival. The chain is Protein SREK1IP1 (Srek1ip1) from Rattus norvegicus (Rat).